We begin with the raw amino-acid sequence, 94 residues long: Aspartyl/glutamyl-tRNA(Asn/Gln) amidotransferase subunit C (94 aa).

The protein belongs to the GatC family. In terms of assembly, heterotrimer of A, B and C subunits.

It catalyses the reaction L-glutamyl-tRNA(Gln) + L-glutamine + ATP + H2O = L-glutaminyl-tRNA(Gln) + L-glutamate + ADP + phosphate + H(+). It carries out the reaction L-aspartyl-tRNA(Asn) + L-glutamine + ATP + H2O = L-asparaginyl-tRNA(Asn) + L-glutamate + ADP + phosphate + 2 H(+). Allows the formation of correctly charged Asn-tRNA(Asn) or Gln-tRNA(Gln) through the transamidation of misacylated Asp-tRNA(Asn) or Glu-tRNA(Gln) in organisms which lack either or both of asparaginyl-tRNA or glutaminyl-tRNA synthetases. The reaction takes place in the presence of glutamine and ATP through an activated phospho-Asp-tRNA(Asn) or phospho-Glu-tRNA(Gln). The protein is Aspartyl/glutamyl-tRNA(Asn/Gln) amidotransferase subunit C of Nitratidesulfovibrio vulgaris (strain ATCC 29579 / DSM 644 / CCUG 34227 / NCIMB 8303 / VKM B-1760 / Hildenborough) (Desulfovibrio vulgaris).